Reading from the N-terminus, the 227-residue chain is Protein FAM3C (227 aa).

The N-terminal stretch at 1–24 (MRVAGAAKLVVAVAVFLLTFYVIS) is a signal peptide. Intrachain disulfides connect Cys58–Cys86 and Cys64–Cys221. The GG-type lectin domain occupies 67 to 225 (KHFAFKMASG…VEMEGCIPQK (159 aa)).

The protein belongs to the FAM3 family.

It is found in the secreted. Its subcellular location is the cytoplasmic vesicle. Its function is as follows. May be involved in retinal laminar formation. Promotes epithelial to mesenchymal transition. This is Protein FAM3C (FAM3C) from Bos taurus (Bovine).